We begin with the raw amino-acid sequence, 584 residues long: uncharacterized protein (584 aa).

Disordered stretches follow at residues 123–156, 209–264, and 355–479; these read LSCS…PSSP, KIVT…INGG, and STQL…ITPT. 2 stretches are compositionally biased toward low complexity: residues 237–260 and 366–376; these read SLSF…PKSS and SISAATTTTIT. 2 stretches are compositionally biased toward polar residues: residues 377 to 388 and 395 to 419; these read PHNNNSTMTTKT and DTSN…STTP. Residues 425–479 show a composition bias toward low complexity; sequence MSMTPLSSSSSSSTTPSKFINPLPSSSSKTTTTITNSKRLSTLSKPSPITPITPT.

This is an uncharacterized protein from Dictyostelium discoideum (Social amoeba).